The following is a 130-amino-acid chain: DNA-directed RNA polymerase subunit omega (130 aa).

The segment at 110–130 (EELLKGLEGLAPPEEQPEEDE) is disordered.

Belongs to the RNA polymerase subunit omega family. As to quaternary structure, the RNAP catalytic core consists of 2 alpha, 1 beta, 1 beta' and 1 omega subunit. When a sigma factor is associated with the core the holoenzyme is formed, which can initiate transcription.

It carries out the reaction RNA(n) + a ribonucleoside 5'-triphosphate = RNA(n+1) + diphosphate. In terms of biological role, promotes RNA polymerase assembly. Latches the N- and C-terminal regions of the beta' subunit thereby facilitating its interaction with the beta and alpha subunits. The chain is DNA-directed RNA polymerase subunit omega from Bradyrhizobium sp. (strain BTAi1 / ATCC BAA-1182).